The sequence spans 348 residues: NADH-quinone oxidoreductase subunit H 1 (348 aa).

The next 8 helical transmembrane spans lie at 11–31 (IYYISMVAKVLVVFVFVLLTV), 83–103 (FAFLIAPIIALVPAFIGFAVI), 136–156 (VGVLYILALASIGVYGIVLAG), 172–192 (SAQMISYELAAGLAIISVFML), 208–228 (GAWYCFKQPLAFILFFICSLA), 268–288 (MVTVCAVTTTLFLGGWHGPAF), 289–309 (LPGWAWFIAKVYFLIFVCMWI), and 324–344 (LGWKVFLPLTLVNIIVTGIVV).

Belongs to the complex I subunit 1 family. As to quaternary structure, NDH-1 is composed of 14 different subunits. Subunits NuoA, H, J, K, L, M, N constitute the membrane sector of the complex.

The protein resides in the cell inner membrane. It carries out the reaction a quinone + NADH + 5 H(+)(in) = a quinol + NAD(+) + 4 H(+)(out). Its function is as follows. NDH-1 shuttles electrons from NADH, via FMN and iron-sulfur (Fe-S) centers, to quinones in the respiratory chain. The immediate electron acceptor for the enzyme in this species is believed to be ubiquinone. Couples the redox reaction to proton translocation (for every two electrons transferred, four hydrogen ions are translocated across the cytoplasmic membrane), and thus conserves the redox energy in a proton gradient. This subunit may bind ubiquinone. The protein is NADH-quinone oxidoreductase subunit H 1 of Geobacter sulfurreducens (strain ATCC 51573 / DSM 12127 / PCA).